A 431-amino-acid chain; its full sequence is Enolase (431 aa).

Glutamine 167 serves as a coordination point for (2R)-2-phosphoglycerate. Catalysis depends on glutamate 209, which acts as the Proton donor. The Mg(2+) site is built by aspartate 246, glutamate 290, and aspartate 317. 4 residues coordinate (2R)-2-phosphoglycerate: lysine 342, arginine 371, serine 372, and lysine 393. Lysine 342 functions as the Proton acceptor in the catalytic mechanism.

This sequence belongs to the enolase family. Component of the RNA degradosome, a multiprotein complex involved in RNA processing and mRNA degradation. It depends on Mg(2+) as a cofactor.

It localises to the cytoplasm. The protein localises to the secreted. Its subcellular location is the cell surface. It carries out the reaction (2R)-2-phosphoglycerate = phosphoenolpyruvate + H2O. It participates in carbohydrate degradation; glycolysis; pyruvate from D-glyceraldehyde 3-phosphate: step 4/5. Functionally, catalyzes the reversible conversion of 2-phosphoglycerate (2-PG) into phosphoenolpyruvate (PEP). It is essential for the degradation of carbohydrates via glycolysis. This Erwinia tasmaniensis (strain DSM 17950 / CFBP 7177 / CIP 109463 / NCPPB 4357 / Et1/99) protein is Enolase.